Reading from the N-terminus, the 216-residue chain is MRLRNKPWAEEMITNHPEVIVPNPEDFKGNWQVVFGNNNPIHIEVGTGKGQFVTGMALQNPDINYIGIELYDSVIVCALEKVLEAKSPANLRLLKVNGADLNKFFNKNDVARVYLNFSDPWPKTRHAKRRLTHGDFLKLYESILVDNGEIHFKTDNRGLFEFSLISISEYGMLLKYVSLDLHANMPEDNVMTEYEQKFSAKGQPIYRLESQFITKL.

S-adenosyl-L-methionine contacts are provided by glutamate 44, glutamate 69, asparagine 97, and aspartate 119. Aspartate 119 is a catalytic residue. Residues lysine 123, aspartate 155, and 192 to 195 each bind substrate; that span reads TEYE.

This sequence belongs to the class I-like SAM-binding methyltransferase superfamily. TrmB family.

It catalyses the reaction guanosine(46) in tRNA + S-adenosyl-L-methionine = N(7)-methylguanosine(46) in tRNA + S-adenosyl-L-homocysteine. It participates in tRNA modification; N(7)-methylguanine-tRNA biosynthesis. In terms of biological role, catalyzes the formation of N(7)-methylguanine at position 46 (m7G46) in tRNA. This is tRNA (guanine-N(7)-)-methyltransferase from Lysinibacillus sphaericus (strain C3-41).